The sequence spans 354 residues: 3-dehydroquinate synthase (354 aa).

Residues 100–104 (GATGD), 124–125 (TT), K136, K145, and 163–166 (FLAT) contribute to the NAD(+) site. Positions 178, 242, and 256 each coordinate Zn(2+).

The protein belongs to the sugar phosphate cyclases superfamily. Dehydroquinate synthase family. Requires Co(2+) as cofactor. Zn(2+) is required as a cofactor. The cofactor is NAD(+).

The protein localises to the cytoplasm. It catalyses the reaction 7-phospho-2-dehydro-3-deoxy-D-arabino-heptonate = 3-dehydroquinate + phosphate. It functions in the pathway metabolic intermediate biosynthesis; chorismate biosynthesis; chorismate from D-erythrose 4-phosphate and phosphoenolpyruvate: step 2/7. In terms of biological role, catalyzes the conversion of 3-deoxy-D-arabino-heptulosonate 7-phosphate (DAHP) to dehydroquinate (DHQ). This chain is 3-dehydroquinate synthase, found in Staphylococcus haemolyticus (strain JCSC1435).